We begin with the raw amino-acid sequence, 277 residues long: Undecaprenyl-diphosphatase 1 (277 aa).

Transmembrane regions (helical) follow at residues 1 to 21 (MSLL…FLPI), 39 to 58 (AGFS…VILY), 85 to 105 (FWFA…GILF), 113 to 133 (FKAP…LIII), 147 to 167 (MTIW…IPGL), 191 to 211 (SFLL…DDLI), 226 to 246 (ASFV…LNLV), and 251 to 271 (LVYF…FQDA).

This sequence belongs to the UppP family.

It is found in the cell membrane. It catalyses the reaction di-trans,octa-cis-undecaprenyl diphosphate + H2O = di-trans,octa-cis-undecaprenyl phosphate + phosphate + H(+). Its function is as follows. Catalyzes the dephosphorylation of undecaprenyl diphosphate (UPP). Confers resistance to bacitracin. The polypeptide is Undecaprenyl-diphosphatase 1 (Shouchella clausii (strain KSM-K16) (Alkalihalobacillus clausii)).